The primary structure comprises 476 residues: Protein DETOXIFICATION 4 (476 aa).

12 helical membrane-spanning segments follow: residues 35–55, 66–86, 117–137, 154–174, 176–196, 208–228, 260–280, 289–309, 332–352, 370–390, 408–428, and 433–453; these read AVPM…SVMV, GVAL…FGLV, IPIC…LISL, LIPT…LLAQ, LVLP…AVCW, GAAL…SCYV, AAML…SGLL, VLSI…GVAA, LAGL…LFAF, VADL…TAVL, VVAY…SCEL, and LWCG…IVTA.

The protein belongs to the multi antimicrobial extrusion (MATE) (TC 2.A.66.1) family.

The protein resides in the membrane. This chain is Protein DETOXIFICATION 4, found in Arabidopsis thaliana (Mouse-ear cress).